A 338-amino-acid chain; its full sequence is tRNA N6-adenosine threonylcarbamoyltransferase (338 aa).

Fe cation-binding residues include H111 and H115. Substrate is bound by residues 134–138, D167, G180, and N272; that span reads LVSGG. Position 300 (D300) interacts with Fe cation.

This sequence belongs to the KAE1 / TsaD family. It depends on Fe(2+) as a cofactor.

The protein resides in the cytoplasm. The enzyme catalyses L-threonylcarbamoyladenylate + adenosine(37) in tRNA = N(6)-L-threonylcarbamoyladenosine(37) in tRNA + AMP + H(+). Its function is as follows. Required for the formation of a threonylcarbamoyl group on adenosine at position 37 (t(6)A37) in tRNAs that read codons beginning with adenine. Is involved in the transfer of the threonylcarbamoyl moiety of threonylcarbamoyl-AMP (TC-AMP) to the N6 group of A37, together with TsaE and TsaB. TsaD likely plays a direct catalytic role in this reaction. This Aliivibrio fischeri (strain MJ11) (Vibrio fischeri) protein is tRNA N6-adenosine threonylcarbamoyltransferase.